A 451-amino-acid polypeptide reads, in one-letter code: Tol-Pal system protein TolB 1 (451 aa).

The first 19 residues, 1 to 19 (MTLRMLFAFALLAAAPAQA), serve as a signal peptide directing secretion. Residues 18–29 (QAQQTEPQPAEE) are compositionally biased toward low complexity. Disordered regions lie at residues 18-37 (QAQQ…GTVS) and 431-451 (NERR…PLLP).

This sequence belongs to the TolB family. In terms of assembly, the Tol-Pal system is composed of five core proteins: the inner membrane proteins TolA, TolQ and TolR, the periplasmic protein TolB and the outer membrane protein Pal. They form a network linking the inner and outer membranes and the peptidoglycan layer.

The protein localises to the periplasm. Part of the Tol-Pal system, which plays a role in outer membrane invagination during cell division and is important for maintaining outer membrane integrity. This Novosphingobium aromaticivorans (strain ATCC 700278 / DSM 12444 / CCUG 56034 / CIP 105152 / NBRC 16084 / F199) protein is Tol-Pal system protein TolB 1.